A 191-amino-acid polypeptide reads, in one-letter code: MYVVLEGVDGVGKSTQVGLLKDRFKNALFTKEPGGTKMGESLRHIALNENISELARAFLFLSDRAEHTESVIKPALKEKRLIISDRSLISGMAYSEFSSLELNLLATQSVLPAKIILLVIDKEGLKQRLSLKSLDKIENQGTEKLLTIQQKLKTHAHALQEKFGCEVLELDAQKSVGDLHRQIAAFIECVV.

Position 7–14 (7–14) interacts with ATP; it reads GVDGVGKS.

The protein belongs to the thymidylate kinase family.

It carries out the reaction dTMP + ATP = dTDP + ADP. Functionally, phosphorylation of dTMP to form dTDP in both de novo and salvage pathways of dTTP synthesis. The protein is Thymidylate kinase of Helicobacter pylori (strain HPAG1).